The primary structure comprises 331 residues: Protein-methionine-sulfoxide reductase catalytic subunit MsrP (331 aa).

The tat-type signal signal peptide spans 1–57 (MLIKKTLRAALAGDDIPRSEITPRAVFEHRRRILQAAGAAAAGGLVGAHGLALAAYA). Mo-molybdopterin is bound by residues asparagine 90, 93 to 94 (YE), cysteine 148, threonine 183, asparagine 231, arginine 236, and 247 to 249 (SAK).

This sequence belongs to the MsrP family. Heterodimer of a catalytic subunit (MsrP) and a heme-binding subunit (MsrQ). It depends on Mo-molybdopterin as a cofactor. Predicted to be exported by the Tat system. The position of the signal peptide cleavage has not been experimentally proven.

It localises to the periplasm. It carries out the reaction L-methionyl-[protein] + a quinone + H2O = L-methionyl-(S)-S-oxide-[protein] + a quinol. It catalyses the reaction L-methionyl-[protein] + a quinone + H2O = L-methionyl-(R)-S-oxide-[protein] + a quinol. In terms of biological role, part of the MsrPQ system that repairs oxidized periplasmic proteins containing methionine sulfoxide residues (Met-O), using respiratory chain electrons. Thus protects these proteins from oxidative-stress damage caused by reactive species of oxygen and chlorine generated by the host defense mechanisms. MsrPQ is essential for the maintenance of envelope integrity under bleach stress, rescuing a wide series of structurally unrelated periplasmic proteins from methionine oxidation. The catalytic subunit MsrP is non-stereospecific, being able to reduce both (R-) and (S-) diastereoisomers of methionine sulfoxide. This is Protein-methionine-sulfoxide reductase catalytic subunit MsrP from Burkholderia mallei (strain ATCC 23344).